We begin with the raw amino-acid sequence, 3313 residues long: PHD finger protein rhinoceros (3313 aa).

The segment covering 1 to 16 (MSQRGKRGNQHHHQSH) has biased composition (basic residues). The interval 1 to 136 (MSQRGKRGNQ…QGASTSSSWQ (136 aa)) is disordered. Low complexity-rich tracts occupy residues 42-71 (PPNG…ATGG) and 100-134 (LGAA…TSSS). The PHD-type 1 zinc finger occupies 323–373 (NVICDVCRSPDSEEANEMVFCDNCNICVHQACYGITAIPSGQWLCRTCSMG). The C2HC pre-PHD-type zinc-finger motif lies at 375 to 409 (TPDCVLCPNKAGAMKSNKSGKHWAHVSCALWIPEV). The segment at 433-487 (LVCVLCRKRVGSCIQCSKHSMSKGKKENAGGASGGGSASVTSSMHKANKYATGTG) adopts a PHD-type 2; degenerate zinc-finger fold. 17 disordered regions span residues 453–526 (MSKG…ARAQ), 708–1076 (LQSG…TKAA), 1107–1842 (KEAK…PPSH), 1961–2033 (AQKE…TMGN), 2104–2136 (PVTA…RMQR), 2145–2164 (ARRS…PPAT), 2219–2252 (AAPQ…FNGG), 2353–2374 (PAYP…PAHP), 2398–2514 (VAAK…PPPM), 2563–2587 (TTRG…LHPV), 2647–2679 (ATGT…QPPA), 2827–2871 (SCGL…SSSR), 2888–2954 (LAGA…IKIR), 2978–2998 (YEMT…YSTP), 3017–3077 (DFDK…SATT), 3144–3233 (KAEK…SLPE), and 3259–3313 (YENS…CEVR). The span at 512 to 526 (KNDMTSEERNQARAQ) shows a compositional bias: basic and acidic residues. Residues 735–749 (KKLNNGAITSRTSSP) are compositionally biased toward polar residues. The span at 760–772 (STSTSTATATTAA) shows a compositional bias: low complexity. Residues 792–802 (GAATGTSTHNK) show a composition bias toward polar residues. 2 stretches are compositionally biased toward low complexity: residues 803–861 (TQSQ…ASGI) and 894–912 (EAAA…ATSS). Basic and acidic residues predominate over residues 919–934 (QQRRRQEPERERDGRG). Residues 942–955 (TVPNRTQPTKSKQS) are compositionally biased toward polar residues. Residues 956–972 (TQADAGSGAGTGAAVET) show a composition bias toward low complexity. Acidic residues predominate over residues 994-1003 (ESLSSDESEE). Residues 1015 to 1025 (AALSSGLAASG) show a composition bias toward low complexity. A compositionally biased stretch (polar residues) spans 1058–1072 (VESNVSDSQNQQTIR). 2 stretches are compositionally biased toward basic and acidic residues: residues 1159-1168 (AADRMREPES) and 1178-1205 (KLKD…KEQS). The span at 1250 to 1266 (EAKSTAPAAKPTAAKTS) shows a compositional bias: low complexity. Positions 1285–1301 (LKSSKPLQDTTFSTANE) are enriched in polar residues. Composition is skewed to low complexity over residues 1308–1324 (AATT…GVAT), 1377–1404 (SSSS…SGSD), and 1451–1464 (PAAS…AAAT). Polar residues predominate over residues 1475–1485 (TARTRQNSTNK). Positions 1551-1579 (SPEKQTARRKSRADESPKKIPNLEHEINQ) are enriched in basic and acidic residues. The segment covering 1638-1650 (PVVEPEVETEIEP) has biased composition (acidic residues). Residues 1667–1678 (TAPTHTQLSANA) are compositionally biased toward polar residues. The span at 1691-1702 (PAAPLPASPTPT) shows a compositional bias: pro residues. The segment covering 1722–1734 (SRWRSRRRRRRRS) has biased composition (basic residues). Residues 1744-1773 (HTQHLLNEMEMARELEEERKNELLANASKY) are a coiled coil. A compositionally biased stretch (basic and acidic residues) spans 1753–1765 (EMARELEEERKNE). Polar residues-rich tracts occupy residues 1771-1781 (SKYSASTSSPA) and 1796-1805 (DSNSANSGGD). Positions 1806–1819 (QQQQQQQQPLPQQL) are enriched in low complexity. Residues 1823–1832 (SPSSEVASTI) are compositionally biased toward polar residues. Low complexity predominate over residues 1965-1984 (QQQQQQQQQQQQQQQQQQQQ). Composition is skewed to polar residues over residues 1985 to 1999 (SCLY…SVAS) and 2007 to 2018 (MTANSGSYANSL). Residues 2019–2033 (TNTPNATPTNATMGN) are compositionally biased toward low complexity. The segment covering 2106–2118 (TAQSGAGSNSNKL) has biased composition (polar residues). 2 stretches are compositionally biased toward low complexity: residues 2148–2157 (SSSPSSVSES) and 2222–2242 (QQQT…QQQQ). The segment covering 2439–2451 (PVQPQPPTPPAPA) has biased composition (pro residues). Residues 2479–2488 (GSGGSGAPGR) are compositionally biased toward gly residues. Residues 2658–2679 (PAVSAAPVAPAPAPAANSQPPA) show a composition bias toward low complexity. Positions 2891-2900 (ASGGGAGTAS) are enriched in gly residues. A compositionally biased stretch (polar residues) spans 2909 to 2924 (CSSGSNNDNNGKTGAA). Over residues 2935-2946 (KTLESSEDDHQT) the composition is skewed to basic and acidic residues. A compositionally biased stretch (basic and acidic residues) spans 3017–3026 (DFDKGEENNK). Over residues 3046–3065 (KRPKSSKPKKDKKEKKRQKQ) the composition is skewed to basic residues. Residues 3179–3198 (TSPQGLLLNSFTPHSQNANA) show a composition bias toward polar residues. Over residues 3268-3290 (SASGTGSASSNSCNSNSNNNNNN) the composition is skewed to low complexity. Positions 3291–3302 (GSGGGAASGGGS) are enriched in gly residues.

Belongs to the JADE family.

The protein resides in the nucleus. In terms of biological role, may function as a negative regulator of the EGFR/Ras/MAPK signaling pathway during eye development. The chain is PHD finger protein rhinoceros (rno) from Drosophila pseudoobscura pseudoobscura (Fruit fly).